Here is a 124-residue protein sequence, read N- to C-terminus: Large ribosomal subunit protein bL12 (124 aa).

This sequence belongs to the bacterial ribosomal protein bL12 family. In terms of assembly, homodimer. Part of the ribosomal stalk of the 50S ribosomal subunit. Forms a multimeric L10(L12)X complex, where L10 forms an elongated spine to which 2 to 4 L12 dimers bind in a sequential fashion. Binds GTP-bound translation factors.

Its function is as follows. Forms part of the ribosomal stalk which helps the ribosome interact with GTP-bound translation factors. Is thus essential for accurate translation. This chain is Large ribosomal subunit protein bL12, found in Aromatoleum aromaticum (strain DSM 19018 / LMG 30748 / EbN1) (Azoarcus sp. (strain EbN1)).